Reading from the N-terminus, the 636-residue chain is LDL receptor repeat-containing protein egg-1 (636 aa).

Topologically, residues 1–130 (MSSIAQKNRN…NHSNLFQCPS (130 aa)) are cytoplasmic. Residues 131–151 (VAIVLVLALVILGVLAAIPLT) form a helical; Signal-anchor for type II membrane protein membrane-spanning segment. Topologically, residues 152–636 (LMLTSSAQKM…VLKNSGRFPY (485 aa)) are extracellular. An N-linked (GlcNAc...) asparagine glycan is attached at asparagine 202. LDL-receptor class A domains lie at 205-243 (TCSG…ENCK), 244-296 (ECQS…AMCK), 298-335 (TCSK…NNCN), 336-375 (KCQK…QQCD), 378-415 (TCSG…ENCP), 457-499 (KCHP…KNCT), 503-541 (ECGI…QNCS), and 542-579 (QCAS…LKCS). 22 disulfide bridges follow: cysteine 213-cysteine 233, cysteine 227-cysteine 242, cysteine 245-cysteine 273, cysteine 251-cysteine 286, cysteine 280-cysteine 295, cysteine 299-cysteine 312, cysteine 306-cysteine 325, cysteine 319-cysteine 334, cysteine 337-cysteine 365, cysteine 359-cysteine 374, cysteine 379-cysteine 392, cysteine 387-cysteine 405, cysteine 399-cysteine 414, cysteine 458-cysteine 476, cysteine 466-cysteine 489, cysteine 483-cysteine 498, cysteine 504-cysteine 518, cysteine 514-cysteine 531, cysteine 525-cysteine 540, cysteine 543-cysteine 556, cysteine 550-cysteine 569, and cysteine 563-cysteine 578. An N-linked (GlcNAc...) asparagine glycan is attached at asparagine 508. A glycan (N-linked (GlcNAc...) asparagine) is linked at asparagine 614.

The protein localises to the cell membrane. Probable receptor which is required for the oocyte-to-zygote transition although its exact function is controversial. Seems to be required for fertilization probably by promoting the interaction or fusion between sperm and oocyte. Conversely, shown to be dispensable for fertilization but required for the formation of a continuous and cohesive eggshell chitin layer by maintaining a homogenous distribution of chitin synthase chs-1 at the unfertilized oocyte cell membrane. Appears to recruit or maintain together to the unfertilized oocyte cortex several proteins including chs-1, kinase mbk-2 and pseudophosphatases egg-3, and possibly egg-4 and egg-5. This is LDL receptor repeat-containing protein egg-1 from Caenorhabditis briggsae.